Consider the following 96-residue polypeptide: Co-chaperonin GroES (96 aa).

Belongs to the GroES chaperonin family. As to quaternary structure, heptamer of 7 subunits arranged in a ring. Interacts with the chaperonin GroEL.

Its subcellular location is the cytoplasm. In terms of biological role, together with the chaperonin GroEL, plays an essential role in assisting protein folding. The GroEL-GroES system forms a nano-cage that allows encapsulation of the non-native substrate proteins and provides a physical environment optimized to promote and accelerate protein folding. GroES binds to the apical surface of the GroEL ring, thereby capping the opening of the GroEL channel. In Albidiferax ferrireducens (strain ATCC BAA-621 / DSM 15236 / T118) (Rhodoferax ferrireducens), this protein is Co-chaperonin GroES.